A 177-amino-acid polypeptide reads, in one-letter code: Nicotinamide-nucleotide adenylyltransferase (177 aa).

This sequence belongs to the archaeal NMN adenylyltransferase family.

The protein localises to the cytoplasm. It catalyses the reaction beta-nicotinamide D-ribonucleotide + ATP + H(+) = diphosphate + NAD(+). Its pathway is cofactor biosynthesis; NAD(+) biosynthesis; NAD(+) from nicotinamide D-ribonucleotide: step 1/1. The chain is Nicotinamide-nucleotide adenylyltransferase from Halobacterium salinarum (strain ATCC 29341 / DSM 671 / R1).